Reading from the N-terminus, the 187-residue chain is UPF0301 protein Sputcn32_2681 (187 aa).

It belongs to the UPF0301 (AlgH) family.

This Shewanella putrefaciens (strain CN-32 / ATCC BAA-453) protein is UPF0301 protein Sputcn32_2681.